The chain runs to 250 residues: Adenosylcobinamide-GDP ribazoletransferase (250 aa).

6 helical membrane-spanning segments follow: residues 33 to 53 (IASY…LFYI), 63 to 83 (IVMT…HIDG), 109 to 129 (LGTN…LFLT), 137 to 157 (LTAL…SMMI), 180 to 200 (FAIA…LAVF), and 203 to 223 (ILTI…LRIG).

The protein belongs to the CobS family. The cofactor is Mg(2+).

The protein localises to the cell membrane. It catalyses the reaction alpha-ribazole + adenosylcob(III)inamide-GDP = adenosylcob(III)alamin + GMP + H(+). The catalysed reaction is alpha-ribazole 5'-phosphate + adenosylcob(III)inamide-GDP = adenosylcob(III)alamin 5'-phosphate + GMP + H(+). It participates in cofactor biosynthesis; adenosylcobalamin biosynthesis; adenosylcobalamin from cob(II)yrinate a,c-diamide: step 7/7. Its function is as follows. Joins adenosylcobinamide-GDP and alpha-ribazole to generate adenosylcobalamin (Ado-cobalamin). Also synthesizes adenosylcobalamin 5'-phosphate from adenosylcobinamide-GDP and alpha-ribazole 5'-phosphate. This Thermoanaerobacter sp. (strain X514) protein is Adenosylcobinamide-GDP ribazoletransferase.